Consider the following 248-residue polypeptide: Tetraspanin-16 (248 aa).

Over 1-7 the chain is Cytoplasmic; that stretch reads MSEIRTG. The helical transmembrane segment at 8-28 threads the bilayer; that stretch reads FLTMATIILICIGLTMTGTGL. Residues 29–44 lie on the Extracellular side of the membrane; that stretch reads YYRKTVSKCIRETDGS. A helical transmembrane segment spans residues 45–65; it reads FVVIGLLLLVIPQFALYAICC. Residues 66–69 are Cytoplasmic-facing; sequence HSKR. A helical membrane pass occupies residues 70–90; that stretch reads MFTIYIYAMIFVSIVLGGYSL. The Extracellular portion of the chain corresponds to 91-208; the sequence is KCFIYNTTFG…MSILKAIVHQ (118 aa). 2 N-linked (GlcNAc...) asparagine glycosylation sites follow: asparagine 96 and asparagine 141. A helical membrane pass occupies residues 209-229; the sequence is WKYLSMFSYPALFLVCLSLAI. The Cytoplasmic portion of the chain corresponds to 230 to 248; it reads SRSIMDTFDEPDDYRGYYS.

Belongs to the tetraspanin (TM4SF) family.

It is found in the membrane. Its function is as follows. May be involved in the regulation of cell differentiation. The chain is Tetraspanin-16 (TET16) from Arabidopsis thaliana (Mouse-ear cress).